The sequence spans 566 residues: MSAGKKHARDGEDQGARLVKKAKTADTQTDSDPAALKTDKKKKDKKDKKERKEKKEKKSKKEDAEEDSEELQNGDSAAVDSEPKPEKEKKEKNNKKDKKDKKDKKDKLKSSGAPTTNGIAQDGEANAATTTPNGSAQRNGAAYSYQQTKTLDAIPEDEIKEFLAKQEIAIADPLGANLRPIIHFSHLPTSTLTSKKPFASFTAPTPIQAASWPFALSGRDVIGIAETGSGKTMAFAVPCIESLASSPKPNHAKGDRTAYARAVVVSPTRELAMQTHAAMSSLASLVGLSVVCLYGGAPKDDQRALLRKNSGADIIVATPGRLKDFLSEGCVSLSDVMFAVLDEADRMLDKGFEEDIKLILGSCRPREKRQTLMFTATWPTSVRGLAEGFMIDPVKATIGNRTRAGEEGEGNGSTELQANIRIEQKVEVVDPRGKEQRLLELLKEAQKGSAKNDRILVFCLYKKEAVRVEQNLERRGIRVCSIHGDLRQDQRTRSLESFKAGTTSVLVATDVAARGLDIPEVKLVINVTFPLTIEDYVHRIGRTGRAGKKGKAITLFTEHDKSHSGS.

Residues 1–139 (MSAGKKHARD…TTPNGSAQRN (139 aa)) form a disordered region. Residues 39–58 (DKKKKDKKDKKERKEKKEKK) are compositionally biased toward basic residues. A compositionally biased stretch (basic and acidic residues) spans 81 to 91 (SEPKPEKEKKE). Over residues 92 to 102 (KNNKKDKKDKK) the composition is skewed to basic residues. Polar residues predominate over residues 127 to 139 (AATTTPNGSAQRN). The Q motif signature appears at 182-209 (IHFSHLPTSTLTSKKPFASFTAPTPIQA). In terms of domain architecture, Helicase ATP-binding spans 212–396 (WPFALSGRDV…EGFMIDPVKA (185 aa)). Residue 225-232 (AETGSGKT) participates in ATP binding. Residues 342-345 (DEAD) carry the DEAD box motif. The Helicase C-terminal domain occupies 433–566 (GKEQRLLELL…TEHDKSHSGS (134 aa)).

The protein belongs to the DEAD box helicase family. DDX5/DBP2 subfamily.

The protein resides in the nucleus. The protein localises to the nucleolus. The enzyme catalyses ATP + H2O = ADP + phosphate + H(+). ATP-dependent RNA helicase required for 60S ribosomal subunit synthesis. Involved in efficient pre-rRNA processing, predominantly at site A3, which is necessary for the normal formation of 25S and 5.8S rRNAs. The polypeptide is ATP-dependent RNA helicase DBP3 (DBP3) (Chaetomium globosum (strain ATCC 6205 / CBS 148.51 / DSM 1962 / NBRC 6347 / NRRL 1970) (Soil fungus)).